Reading from the N-terminus, the 264-residue chain is 2-hydroxyhexa-2,4-dienoate hydratase (264 aa).

The protein belongs to the hydratase/decarboxylase family.

It catalyses the reaction (2Z,4Z)-2-hydroxyhexa-2,4-dienoate + H2O = 4-hydroxy-2-oxohexanoate. Its function is as follows. Involved in the catatabolism of testosterone. Catalyzes the hydration of 2-hydroxyhexa-2,4-dienoic acid to 4-hydroxy-2-oxohexanoic acid. The protein is 2-hydroxyhexa-2,4-dienoate hydratase (tesE) of Comamonas testosteroni (Pseudomonas testosteroni).